Here is a 366-residue protein sequence, read N- to C-terminus: L-Ala-D/L-Glu epimerase (366 aa).

Residues R24, T135, and K160 each coordinate substrate. K162 acts as the Proton acceptor; specific for (R)-substrate epimerization in catalysis. 3 residues coordinate Mg(2+): D191, E219, and D244. Residue K268 is the Proton acceptor; specific for (S)-substrate epimerization of the active site. S296, I298, D321, and D323 together coordinate substrate.

It belongs to the mandelate racemase/muconate lactonizing enzyme family. In terms of assembly, homooctamer; tetramer of dimers. The cofactor is Mg(2+).

It carries out the reaction L-alanyl-L-glutamate = L-alanyl-D-glutamate. Its pathway is cell wall degradation; peptidoglycan degradation. Catalyzes the epimerization of L-Ala-D-Glu to L-Ala-L-Glu and has probably a role in the metabolism of the murein peptide, of which L-Ala-D-Glu is a component. Is also able to catalyze the reverse reaction and the epimerization of the other Ala-X dipeptides L-Ala-L-Asp, L-Ala-L-Leu, L-Ala-L-Met, and L-Ala-L-Ser. Is not able to epimerize other L-Ala-X dipeptides. Is also active with L-Ser-L-Glu and, oddly, L-Pro-L-Glu, but not with L-Glu-L-Glu, L-Lys-L-Glu, L-Lys-L-Ala, or D-Ala-D-Ala. The protein is L-Ala-D/L-Glu epimerase (ykfB) of Bacillus subtilis (strain 168).